The primary structure comprises 236 residues: Hydroxyacylglutathione hydrolase (236 aa).

Zn(2+) contacts are provided by H52, H54, D56, H57, H108, D125, and H163.

The protein belongs to the metallo-beta-lactamase superfamily. Glyoxalase II family. Monomer. Requires Zn(2+) as cofactor.

The catalysed reaction is an S-(2-hydroxyacyl)glutathione + H2O = a 2-hydroxy carboxylate + glutathione + H(+). It participates in secondary metabolite metabolism; methylglyoxal degradation; (R)-lactate from methylglyoxal: step 2/2. Functionally, thiolesterase that catalyzes the hydrolysis of S-D-lactoyl-glutathione to form glutathione and D-lactic acid. In Mannheimia succiniciproducens (strain KCTC 0769BP / MBEL55E), this protein is Hydroxyacylglutathione hydrolase.